Consider the following 140-residue polypeptide: uncharacterized protein (140 aa).

Residues 3-131 enclose the VOC domain; it reads RLDHIGIAVF…NGVLVELCEP (129 aa). His-6, Glu-53, His-77, and Glu-127 together coordinate a divalent metal cation.

This sequence belongs to the methylmalonyl-CoA epimerase family.

This is an uncharacterized protein from Bacillus subtilis (strain 168).